A 478-amino-acid chain; its full sequence is Isoeugenol monooxygenase (478 aa).

The Fe cation site is built by H167, H218, H282, and H471.

The protein belongs to the carotenoid oxygenase family. Fe(2+) serves as cofactor.

The catalysed reaction is (E)-isoeugenol + O2 = vanillin + acetaldehyde. Its activity is regulated as follows. Inhibited by Co(2+), Ni(2+) and Zn(2+), which may inhibit enzyme activity by replacing iron in the catalytic residues. Inhibited by incubation with high concentrations of the iron chelators 1,10-phenanthroline and Tiron. However, iron is not completely removed by the chelators, suggesting that iron is tightly bound to the enzyme. In terms of biological role, involved in isoeugenol degradation. Catalyzes the oxidative cleavage of the side chain double-bond of isoeugenol to form vanillin and acetaldehyde. The protein is Isoeugenol monooxygenase of Pseudomonas nitroreducens.